The primary structure comprises 222 residues: Collectrin (222 aa).

The signal sequence occupies residues M1–A14. The Extracellular portion of the chain corresponds to E15–P141. The 202-residue stretch at A21–L222 folds into the Collectrin-like domain. N-linked (GlcNAc...) asparagine glycans are attached at residues N76 and N93. A helical membrane pass occupies residues V142–V162. Over L163–L222 the chain is Cytoplasmic. Phosphothreonine is present on residues T214 and T220.

This sequence belongs to the CLTRN family. As to quaternary structure, monomer. Homodimer; dimerization prevents CLTRN cleavage by BACE2. Interacts with SLC6A18; this interaction regulates the trafficking of SLC6A18 to the cell membrane and its amino acid transporter activity. Interacts with SLC6A19; this interaction regulates the trafficking of SLC6A19 to the cell membrane and its amino acid transporter activity. Interacts with SNAPIN. In terms of processing, glycosylated. Glycosylation is required for plasma membrane localization and for its cleavage by BACE2. Post-translationally, proteolytically processed in pancreatic beta cells by BACE2 leading to the generation and extracellular release of soluble CLTRN, and a corresponding cell-associated C-terminal fragment which is later cleaved by gamma-secretase. This shedding process inactivates CLTRN. Three cleavage sites have been identified for BACE2, two clustered sites after Phe-116 and Leu-118 and a more membrane proximal site at Phe-125; the preferred BACE2 cleavage site seems to be between Phe-125 and Leu-126, Phe-116 and Leu-118 act as alternative sites. As to expression, kidney; collecting ducts. Pancreas; beta cells of islets.

It localises to the cell membrane. In terms of biological role, plays an important role in amino acid transport by acting as binding partner of amino acid transporters SLC6A18 and SLC6A19, regulating their trafficking on the cell surface and their activity. May also play a role in trafficking of amino acid transporters SLC3A1 and SLC7A9 to the renal cortical cell membrane. Regulator of SNARE complex function. Stimulator of beta cell replication. The polypeptide is Collectrin (Rattus norvegicus (Rat)).